Reading from the N-terminus, the 229-residue chain is UPF0128 protein aq_756 (229 aa).

It belongs to the UPF0128 family.

The chain is UPF0128 protein aq_756 from Aquifex aeolicus (strain VF5).